Consider the following 130-residue polypeptide: Small ribosomal subunit protein uS11c (130 aa).

Belongs to the universal ribosomal protein uS11 family. Part of the 30S ribosomal subunit.

It localises to the plastid. Its subcellular location is the chloroplast. In Anthoceros angustus (Hornwort), this protein is Small ribosomal subunit protein uS11c.